The chain runs to 602 residues: Glutamine--fructose-6-phosphate aminotransferase [isomerizing] (602 aa).

Catalysis depends on Cys-2, which acts as the Nucleophile; for GATase activity. A Glutamine amidotransferase type-2 domain is found at 2 to 217 (CGIVGVVGNT…DQELVIVKAD (216 aa)). The interval 67–87 (IGHTRWATHGKPTEDNAHPHR) is disordered. Basic and acidic residues predominate over residues 77-87 (KPTEDNAHPHR). 2 consecutive SIS domains span residues 283–422 (IIKA…ANGN) and 455–592 (VREL…VDKP). The For Fru-6P isomerization activity role is filled by Lys-597.

In terms of assembly, homodimer.

The protein localises to the cytoplasm. It carries out the reaction D-fructose 6-phosphate + L-glutamine = D-glucosamine 6-phosphate + L-glutamate. In terms of biological role, catalyzes the first step in hexosamine metabolism, converting fructose-6P into glucosamine-6P using glutamine as a nitrogen source. The chain is Glutamine--fructose-6-phosphate aminotransferase [isomerizing] from Streptococcus pneumoniae serotype 4 (strain ATCC BAA-334 / TIGR4).